The following is a 469-amino-acid chain: Uronate isomerase (469 aa).

This sequence belongs to the metallo-dependent hydrolases superfamily. Uronate isomerase family.

The catalysed reaction is D-glucuronate = D-fructuronate. It catalyses the reaction aldehydo-D-galacturonate = keto-D-tagaturonate. It participates in carbohydrate metabolism; pentose and glucuronate interconversion. The polypeptide is Uronate isomerase (Pectobacterium atrosepticum (strain SCRI 1043 / ATCC BAA-672) (Erwinia carotovora subsp. atroseptica)).